A 754-amino-acid chain; its full sequence is Endoribonuclease Dicer-like (754 aa).

The region spanning 132 to 251 is the PAZ domain; that stretch reads QLMCDAKRLS…LPPELCLLLP (120 aa). 2 RNase III domains span residues 298 to 418 and 613 to 734; these read FAIT…TGPN and AQTV…LACG. Residues Glu-336, Asp-404, Glu-407, Glu-649, Asp-720, and Glu-723 each contribute to the Mn(2+) site.

Homodimer. It depends on Mg(2+) as a cofactor. Requires Mn(2+) as cofactor.

Involved in cleaving double-stranded RNA in the RNA interference (RNAi) pathway. It produces 21 to 23 bp dsRNAs (siRNAs) which target the selective destruction of homologous RNAs. This Giardia intestinalis (strain ATCC 50803 / WB clone C6) (Giardia lamblia) protein is Endoribonuclease Dicer-like.